Consider the following 432-residue polypeptide: Glutamate-1-semialdehyde 2,1-aminomutase 2 (432 aa).

Lys268 is modified (N6-(pyridoxal phosphate)lysine).

The protein belongs to the class-III pyridoxal-phosphate-dependent aminotransferase family. HemL subfamily. Homodimer. It depends on pyridoxal 5'-phosphate as a cofactor.

The protein localises to the cytoplasm. It carries out the reaction (S)-4-amino-5-oxopentanoate = 5-aminolevulinate. Its pathway is porphyrin-containing compound metabolism; protoporphyrin-IX biosynthesis; 5-aminolevulinate from L-glutamyl-tRNA(Glu): step 2/2. The sequence is that of Glutamate-1-semialdehyde 2,1-aminomutase 2 from Listeria innocua serovar 6a (strain ATCC BAA-680 / CLIP 11262).